The primary structure comprises 155 residues: Endoribonuclease YbeY (155 aa).

Histidine 110, histidine 114, and histidine 120 together coordinate Zn(2+).

This sequence belongs to the endoribonuclease YbeY family. Zn(2+) serves as cofactor.

The protein localises to the cytoplasm. Single strand-specific metallo-endoribonuclease involved in late-stage 70S ribosome quality control and in maturation of the 3' terminus of the 16S rRNA. The sequence is that of Endoribonuclease YbeY from Deinococcus geothermalis (strain DSM 11300 / CIP 105573 / AG-3a).